A 202-amino-acid polypeptide reads, in one-letter code: Recombination protein RecR (202 aa).

The C4-type zinc finger occupies 56–71 (CVVCGTVSDKEHCRIC). Positions 79–179 (TVICVVEEPK…TVSRLASGLP (101 aa)) constitute a Toprim domain.

Belongs to the RecR family.

Its function is as follows. May play a role in DNA repair. It seems to be involved in an RecBC-independent recombinational process of DNA repair. It may act with RecF and RecO. The chain is Recombination protein RecR from Rhodococcus jostii (strain RHA1).